We begin with the raw amino-acid sequence, 228 residues long: MNKKAWTVLLIEDDPMVQEVNRQFIEQVEGFTVIAAASNGLEGVQLIKQHQPDLTIIDMYMPSQDGLTTLQQIRANGYKTDVIAVTAASDIETVRKVLQYGAVDYIMKPFKFERMKQALEQYRSFQVKISQKEHITQSELDSMLFQQFEEKADLLPKGLNAVTLRRIQQYLSEQNHPISAEEVADGVGIARVTARRYLEFLEQENELKLSVEYGRVGRPINRYMLKIN.

One can recognise a Response regulatory domain in the interval 7-123; that stretch reads TVLLIEDDPM…RMKQALEQYR (117 aa). At aspartate 58 the chain carries 4-aspartylphosphate. The H-T-H motif DNA-binding region spans 180–199; sequence AEEVADGVGIARVTARRYLE.

Post-translationally, phosphorylated by DctS.

It is found in the cytoplasm. Functionally, member of the two-component regulatory system DctS/DctR. Essential for expression of DctP. The protein is Probable C4-dicarboxylate response regulator DctR (dctR) of Priestia megaterium (Bacillus megaterium).